The sequence spans 208 residues: Small ribosomal subunit protein uS4 (208 aa).

In terms of domain architecture, S4 RNA-binding spans 98-161; it reads QRLDNVVYRM…KNNPQIVRAI (64 aa).

It belongs to the universal ribosomal protein uS4 family. As to quaternary structure, part of the 30S ribosomal subunit. Contacts protein S5. The interaction surface between S4 and S5 is involved in control of translational fidelity.

Functionally, one of the primary rRNA binding proteins, it binds directly to 16S rRNA where it nucleates assembly of the body of the 30S subunit. Its function is as follows. With S5 and S12 plays an important role in translational accuracy. This chain is Small ribosomal subunit protein uS4, found in Campylobacter concisus (strain 13826).